An 83-amino-acid polypeptide reads, in one-letter code: UPF0298 protein SERP0712 (83 aa).

It belongs to the UPF0298 family.

It is found in the cytoplasm. In Staphylococcus epidermidis (strain ATCC 35984 / DSM 28319 / BCRC 17069 / CCUG 31568 / BM 3577 / RP62A), this protein is UPF0298 protein SERP0712.